The sequence spans 483 residues: GDP-fucose protein O-fucosyltransferase 3 (483 aa).

The Cytoplasmic portion of the chain corresponds to 1-8 (MVRIPRRK). A helical; Signal-anchor for type II membrane protein transmembrane segment spans residues 9–31 (LLPSCLCMTATVFLMVTVQVLVE). Over 32 to 483 (LGKFERKKFK…FWALVFKDSF (452 aa)) the chain is Lumenal. Residues 45–64 (LQDGQKDVEGDPKHLNPLPK) are disordered. N-linked (GlcNAc...) asparagine glycosylation is found at asparagine 110, asparagine 168, and asparagine 318. Cysteine 389 and cysteine 392 are oxidised to a cystine. A glycan (N-linked (GlcNAc...) asparagine) is linked at asparagine 468.

The protein belongs to the glycosyltransferase 10 family.

Its subcellular location is the endoplasmic reticulum membrane. It catalyses the reaction L-threonyl-[protein] + GDP-beta-L-fucose = 3-O-(alpha-L-fucosyl)-L-threonyl-[protein] + GDP + H(+). The enzyme catalyses L-seryl-[protein] + GDP-beta-L-fucose = 3-O-(alpha-L-fucosyl)-L-seryl-[protein] + GDP + H(+). Its pathway is protein modification; protein glycosylation. In terms of biological role, protein O-fucosyltransferase that specifically catalyzes O-fucosylation of serine or threonine residues in EMI domains of target proteins, such as MMRN1, MMRN2 and EMID1. Attaches fucose through an O-glycosidic linkage. O-fucosylation of EMI domain-containing proteins may be required for facilitating protein folding and secretion. May also show alpha-(1,3)-fucosyltransferase activity toward the innermost N-acetyl glucosamine (GlcNAc) residue in biantennary N-glycan acceptors. However, this was tested with a library of synthetic substrates and this activity is unsure in vivo. May be involved in biosynthesis of Lewis X-carrying biantennary N-glycans that regulate neuron stem cell self-renewal during brain development. In Rattus norvegicus (Rat), this protein is GDP-fucose protein O-fucosyltransferase 3 (Fut10).